Here is a 438-residue protein sequence, read N- to C-terminus: Thymidine phosphorylase (438 aa).

It belongs to the thymidine/pyrimidine-nucleoside phosphorylase family. Homodimer.

It carries out the reaction thymidine + phosphate = 2-deoxy-alpha-D-ribose 1-phosphate + thymine. Its pathway is pyrimidine metabolism; dTMP biosynthesis via salvage pathway; dTMP from thymine: step 1/2. The enzymes which catalyze the reversible phosphorolysis of pyrimidine nucleosides are involved in the degradation of these compounds and in their utilization as carbon and energy sources, or in the rescue of pyrimidine bases for nucleotide synthesis. The sequence is that of Thymidine phosphorylase from Sinorhizobium fredii (strain NBRC 101917 / NGR234).